Reading from the N-terminus, the 173-residue chain is Development-specific protein S (173 aa).

2 Beta/gamma crystallin 'Greek key' domains span residues 2–46 (ANIT…KVPP) and 48–86 (VKAI…RVIS). Ca(2+) contacts are provided by Tyr-8, Asn-37, Thr-38, Ser-40, Gln-54, Asn-77, Asn-78, and Ser-80. The tract at residues 87-90 (VPVQ) is connecting peptide. Beta/gamma crystallin 'Greek key' domains lie at 91–135 (PRAR…KPQG) and 136–173 (LAVV…IRIS).

The protein belongs to the beta/gamma-crystallin family.

In terms of biological role, protein S, induced in large amounts during fruiting body formation, assembles on the surface of myxospores in the presence of calcium ions. This is Development-specific protein S (tps) from Myxococcus xanthus.